We begin with the raw amino-acid sequence, 475 residues long: UDP-N-acetylmuramate--L-alanine ligase (475 aa).

Position 112–118 (112–118) interacts with ATP; the sequence is GTHGKTT.

It belongs to the MurCDEF family.

The protein localises to the cytoplasm. The catalysed reaction is UDP-N-acetyl-alpha-D-muramate + L-alanine + ATP = UDP-N-acetyl-alpha-D-muramoyl-L-alanine + ADP + phosphate + H(+). It participates in cell wall biogenesis; peptidoglycan biosynthesis. Its function is as follows. Cell wall formation. This Paracidovorax citrulli (strain AAC00-1) (Acidovorax citrulli) protein is UDP-N-acetylmuramate--L-alanine ligase.